The primary structure comprises 198 residues: Dynein light chain Tctex-type protein 2 (198 aa).

Residues 1-34 (MEKRGRGVKSSPIQTPNQTPQQAPVTPRKERRPS) are disordered. Polar residues predominate over residues 11–24 (SPIQTPNQTPQQAP).

It belongs to the dynein light chain Tctex-type family. In terms of assembly, interacts with CCDC159. Interacts with CSNK2B. Expressed predominantly in testis. Also expressed in brain, lung and trachea.

It is found in the cytoplasm. The protein localises to the cytoskeleton. Its subcellular location is the cytoplasmic granule. The protein resides in the membrane. May be an accessory component of axonemal dynein and cytoplasmic dynein 1. Candidate for involvement in male sterility. The chain is Dynein light chain Tctex-type protein 2 from Homo sapiens (Human).